Here is a 272-residue protein sequence, read N- to C-terminus: Alcohol dehydrogenase-related 31 kDa protein (272 aa).

Residue 11-34 (YVADCGGIALETSKVLMTKNIAKL) coordinates NAD(+). Ser139 contacts substrate. Residue Tyr152 is the Proton acceptor of the active site.

It belongs to the short-chain dehydrogenases/reductases (SDR) family.

The chain is Alcohol dehydrogenase-related 31 kDa protein (Adhr) from Drosophila mauritiana (Fruit fly).